The following is a 254-amino-acid chain: 3-dehydroquinate dehydratase (254 aa).

3-dehydroquinate contacts are provided by residues Glu-47 to Arg-49 and Arg-83. Residue His-144 is the Proton donor/acceptor of the active site. Residue Lys-171 is the Schiff-base intermediate with substrate of the active site. Positions 213, 232, and 236 each coordinate 3-dehydroquinate.

Belongs to the type-I 3-dehydroquinase family. As to quaternary structure, homodimer.

The catalysed reaction is 3-dehydroquinate = 3-dehydroshikimate + H2O. It functions in the pathway metabolic intermediate biosynthesis; chorismate biosynthesis; chorismate from D-erythrose 4-phosphate and phosphoenolpyruvate: step 3/7. Involved in the third step of the chorismate pathway, which leads to the biosynthesis of aromatic amino acids. Catalyzes the cis-dehydration of 3-dehydroquinate (DHQ) and introduces the first double bond of the aromatic ring to yield 3-dehydroshikimate. This Neisseria gonorrhoeae (strain ATCC 700825 / FA 1090) protein is 3-dehydroquinate dehydratase.